A 529-amino-acid polypeptide reads, in one-letter code: MTLSPYLQEVAKRRTFAIISHPDAGKTTITEKVLLFGQAIQTAGTVKGRGSNQHAKSDWMEMEKQRGISITTSVMQFPYHDCLVNLLDTPGHEDFSEDTYRTLTAVDCCLMVIDAAKGVEDRTRKLMEVTRLRDTPILTFMNKLDRDIRDPMELLDEVENELKIGCAPITWPIGCGKLFKGVYHLYKDETYLYQSGKGHTIQEVRIVKGLNNPDLDAAVGEDLAQQLRDELELVKGASNEFDKELFLAGEITPVFFGTALGNFGVDHMLDGLVEWAPAPMPRQTDTRTVEASEDKFTGFVFKIQANMDPKHRDRVAFMRVVSGKYEKGMKLRQVRTAKDVVISDALTFMAGDRSHVEEAYPGDILGLHNHGTIQIGDTFTQGEMMKFTGIPNFAPELFRRIRLKDPLKQKQLLKGLVQLSEEGAVQVFRPISNNDLIVGAVGVLQFDVVVARLKSEYNVEAVYESVNVATARWVECADAKKFEEFKRKNESQLALDGGDNLAYIATSMVNLRLAQERYPDVQFHQTREH.

The tr-type G domain occupies 11–280 (AKRRTFAIIS…GLVEWAPAPM (270 aa)). GTP contacts are provided by residues 20–27 (SHPDAGKT), 88–92 (DTPGH), and 142–145 (NKLD).

The protein belongs to the TRAFAC class translation factor GTPase superfamily. Classic translation factor GTPase family. PrfC subfamily.

The protein resides in the cytoplasm. In terms of biological role, increases the formation of ribosomal termination complexes and stimulates activities of RF-1 and RF-2. It binds guanine nucleotides and has strong preference for UGA stop codons. It may interact directly with the ribosome. The stimulation of RF-1 and RF-2 is significantly reduced by GTP and GDP, but not by GMP. The chain is Peptide chain release factor 3 from Shigella dysenteriae serotype 1 (strain Sd197).